Here is a 1791-residue protein sequence, read N- to C-terminus: Sodium channel protein type 11 subunit alpha (1791 aa).

Residues 1–126 lie on the Cytoplasmic side of the membrane; that stretch reads MDDRCYPVIF…SIRSLAIRVS (126 aa). An I repeat occupies 115-408; it reads FNSIRSLAIR…VTMAYEEQNK (294 aa). A helical transmembrane segment spans residues 127-148; that stretch reads VHSLFSMFIIGTVIINCVFMAT. Residues 149–156 are Extracellular-facing; sequence GPAKNSNS. Residues 157-180 traverse the membrane as a helical segment; that stretch reads NNTDIAECVFTGIYIFEALIKILA. The Cytoplasmic segment spans residues 181 to 192; that stretch reads RGFILDEFSFLR. Residues 193–212 form a helical membrane-spanning segment; sequence DPWNWLDSIVIGIAIVSYIP. At 213 to 219 the chain is on the extracellular side; it reads GITIKLL. A helical; Voltage-sensor transmembrane segment spans residues 220 to 239; it reads PLRTFRVFRALKAISVVSRL. Residues 240 to 255 lie on the Cytoplasmic side of the membrane; sequence KVIVGALLRSVKKLVN. A helical transmembrane segment spans residues 256–269; sequence VIILTFFCLSIFAL. The Extracellular portion of the chain corresponds to 270–344; it reads VGQQLFMGSL…PDYNYTNFDN (75 aa). Cys283 and Cys322 are disulfide-bonded. N-linked (GlcNAc...) asparagine glycans are attached at residues Asn290 and Asn338. The segment at residues 345-369 is an intramembrane region (pore-forming); the sequence is FGWSFLAMFRLMTQDSWEKLYQQTL. The Extracellular portion of the chain corresponds to 370–376; that stretch reads RTTGLYS. The chain crosses the membrane as a helical span at residues 377 to 402; the sequence is VFFFIVVIFLGSFYLINLTLAVVTMA. Residues 403-572 are Cytoplasmic-facing; sequence YEEQNKNVAA…WLCVKKVLRT (170 aa). The II repeat unit spans residues 559 to 833; the sequence is CCPQWLCVKK…EGEARKTKVQ (275 aa). A helical membrane pass occupies residues 573-596; the sequence is VMTDPFTELAITICIIINTVFLAM. Over 597 to 607 the chain is Extracellular; sequence EHHKMEASFEK. The chain crosses the membrane as a helical span at residues 608–631; it reads MLNIGNLVFTSIFIAEMCLKIIAL. The Cytoplasmic segment spans residues 632-639; that stretch reads DPYHYFRR. Residues 640-659 form a helical membrane-spanning segment; the sequence is GWNIFDSIVALLSFADVMNC. At 660–667 the chain is on the extracellular side; that stretch reads VLQKRSWP. The helical; Voltage-sensor transmembrane segment at 668 to 687 threads the bilayer; it reads FLRSFRVLRVFKLAKSWPTL. Residues 688–702 are Cytoplasmic-facing; the sequence is NTLIKIIGNSVGALG. Residues 703–725 form a helical membrane-spanning segment; it reads SLTVVLVIVIFIFSVVGMQLFGR. Over 726 to 753 the chain is Extracellular; that stretch reads SFNSQKSPKLCNPTGPTVSCLRHWHMGD. An intramembrane region (pore-forming) is located at residues 754-774; that stretch reads FWHSFLVVFRILCGEWIENMW. Residues 775–785 are Extracellular-facing; sequence ECMQEANASSS. A disulfide bond links Cys776 and Cys787. An N-linked (GlcNAc...) asparagine glycan is attached at Asn781. Residues 786–811 form a helical membrane-spanning segment; it reads LCVIVFILITVIGKLVVLNLFIALLL. The Cytoplasmic portion of the chain corresponds to 812-1051; sequence NSFSNEERNG…WWNLRKTCYQ (240 aa). The III repeat unit spans residues 1044 to 1339; that stretch reads NLRKTCYQIV…KKYYNAMKKL (296 aa). A helical membrane pass occupies residues 1052–1074; it reads IVKHSWFESFIIFVILLSSGALI. The Extracellular portion of the chain corresponds to 1075–1088; it reads FEDVHLENQPKIQE. A helical transmembrane segment spans residues 1089 to 1114; it reads LLNCTDIIFTHIFILEMVLKWVAFGF. Over 1115–1120 the chain is Cytoplasmic; it reads GKYFTS. Residues 1121–1138 traverse the membrane as a helical segment; it reads AWCCLDFIIVIVSVTTLI. Residue Asn1139 is a topological domain, extracellular. The helical; Voltage-sensor transmembrane segment at 1140-1161 threads the bilayer; sequence LMELKSFRTLRALRPLRALSQF. Topologically, residues 1162 to 1180 are cytoplasmic; sequence EGMKVVVNALIGAIPAILN. Residues 1181–1202 form a helical membrane-spanning segment; that stretch reads VLLVCLIFWLVFCILGVYFFSG. Over 1203–1243 the chain is Extracellular; it reads KFGKCINGTDSVINYTIITNKSQCESGNFSWINQKVNFDNV. 4 N-linked (GlcNAc...) asparagine glycosylation sites follow: Asn1209, Asn1216, Asn1222, and Asn1230. The pore-forming intramembrane region spans 1244 to 1265; it reads GNAYLALLQVATFKGWMDIIYA. Residues 1266 to 1281 lie on the Extracellular side of the membrane; it reads AVDSTEKEQQPEFESN. A helical membrane pass occupies residues 1282–1308; that stretch reads SLGYIYFVVFIIFGSFFTLNLFIGVII. The Cytoplasmic segment spans residues 1309–1361; the sequence is DNFNQQQKKLGGQDIFMTEEQKKYYNAMKKLGSKKPQKPIPRPLNKCQGLVFD. An IV repeat occupies 1348-1639; sequence IPRPLNKCQG…WEKFDPEATQ (292 aa). The chain crosses the membrane as a helical span at residues 1362 to 1385; the sequence is IVTSQIFDIIIISLIILNMISMMA. Residues 1386–1396 are Extracellular-facing; the sequence is ESYNQPKAMKS. Residues 1397–1420 traverse the membrane as a helical segment; sequence ILDHLNWVFVVIFTLECLIKIFAL. At 1421 to 1426 the chain is on the cytoplasmic side; the sequence is RQYYFT. The helical transmembrane segment at 1427–1450 threads the bilayer; the sequence is NGWNLFDCVVVLLSIVSTMISTLE. At 1451-1461 the chain is on the extracellular side; sequence NQEHIPFPPTL. Residues 1462–1484 traverse the membrane as a helical; Voltage-sensor segment; the sequence is FRIVRLARIGRILRLVRAARGIR. Residues 1485–1499 lie on the Cytoplasmic side of the membrane; sequence TLLFALMMSLPSLFN. A helical membrane pass occupies residues 1500–1522; the sequence is IGLLLFLIMFIYAILGMNWFSKV. Over 1523-1536 the chain is Extracellular; sequence NPESGIDDIFNFKT. Positions 1537–1559 form an intramembrane region, pore-forming; it reads FASSMLCLFQISTSAGWDSLLSP. Residues 1560–1579 are Extracellular-facing; it reads MLRSKESCNSSSENCHLPGI. Asn1568 is a glycosylation site (N-linked (GlcNAc...) asparagine). The helical transmembrane segment at 1580–1604 threads the bilayer; the sequence is ATSYFVSYIIISFLIVVNMYIAVIL. The Cytoplasmic portion of the chain corresponds to 1605–1791; that stretch reads ENFNTATEES…GVAKGKVHCD (187 aa).

It belongs to the sodium channel (TC 1.A.1.10) family. Nav1.9/SCN11A subfamily. In terms of assembly, the voltage-resistant sodium channel consists of an ion conducting pore forming alpha-subunit regulated by one or more auxiliary subunits SCN1B, SCN2B and SCN3B. In terms of tissue distribution, expressed in the dorsal root ganglia and trigeminal ganglia, olfactory bulb, hippocampus, cerebellar cortex, spinal cord, spleen, small intestine and placenta.

The protein resides in the cell membrane. The catalysed reaction is Na(+)(in) = Na(+)(out). With respect to regulation, activity is not sensitive to inhibition by tetrodotoxin. In terms of biological role, sodium channel mediating the voltage-dependent sodium ion permeability of excitable membranes. Assuming opened or closed conformations in response to the voltage difference across the membrane, the protein forms a sodium-selective channel through which sodium ions may pass in accordance with their electrochemical gradient. Involved in membrane depolarization during action potential in nociceptors which function as key relay stations for the electrical transmission of pain signals from the periphery to the central nervous system. Also involved in rapid BDNF-evoked neuronal depolarization. This chain is Sodium channel protein type 11 subunit alpha, found in Homo sapiens (Human).